Here is a 460-residue protein sequence, read N- to C-terminus: Bifunctional protein GlmU (460 aa).

Residues 1-232 (MALNVVILAA…AIEVEGANNR (232 aa)) form a pyrophosphorylase region. UDP-N-acetyl-alpha-D-glucosamine is bound by residues 8–11 (LAAG), Lys-22, Gln-73, 78–79 (GT), 100–102 (YGD), Gly-137, Glu-157, Asn-172, and Asn-230. A Mg(2+)-binding site is contributed by Asp-102. Asn-230 is a binding site for Mg(2+). Residues 233–253 (VQLAQLERAYQAREAEKLMLA) are linker. Positions 254–460 (GANLRDPSRI…GWQRPVKIKK (207 aa)) are N-acetyltransferase. 2 residues coordinate UDP-N-acetyl-alpha-D-glucosamine: Arg-336 and Lys-354. The active-site Proton acceptor is the His-366. The UDP-N-acetyl-alpha-D-glucosamine site is built by Tyr-369 and Asn-380. Residues Ala-383, 389 to 390 (NY), Ser-408, Ala-426, and Arg-443 each bind acetyl-CoA.

The protein in the N-terminal section; belongs to the N-acetylglucosamine-1-phosphate uridyltransferase family. This sequence in the C-terminal section; belongs to the transferase hexapeptide repeat family. As to quaternary structure, homotrimer. Mg(2+) serves as cofactor.

Its subcellular location is the cytoplasm. The enzyme catalyses alpha-D-glucosamine 1-phosphate + acetyl-CoA = N-acetyl-alpha-D-glucosamine 1-phosphate + CoA + H(+). It catalyses the reaction N-acetyl-alpha-D-glucosamine 1-phosphate + UTP + H(+) = UDP-N-acetyl-alpha-D-glucosamine + diphosphate. It participates in nucleotide-sugar biosynthesis; UDP-N-acetyl-alpha-D-glucosamine biosynthesis; N-acetyl-alpha-D-glucosamine 1-phosphate from alpha-D-glucosamine 6-phosphate (route II): step 2/2. Its pathway is nucleotide-sugar biosynthesis; UDP-N-acetyl-alpha-D-glucosamine biosynthesis; UDP-N-acetyl-alpha-D-glucosamine from N-acetyl-alpha-D-glucosamine 1-phosphate: step 1/1. It functions in the pathway bacterial outer membrane biogenesis; LPS lipid A biosynthesis. Functionally, catalyzes the last two sequential reactions in the de novo biosynthetic pathway for UDP-N-acetylglucosamine (UDP-GlcNAc). The C-terminal domain catalyzes the transfer of acetyl group from acetyl coenzyme A to glucosamine-1-phosphate (GlcN-1-P) to produce N-acetylglucosamine-1-phosphate (GlcNAc-1-P), which is converted into UDP-GlcNAc by the transfer of uridine 5-monophosphate (from uridine 5-triphosphate), a reaction catalyzed by the N-terminal domain. The sequence is that of Bifunctional protein GlmU from Shewanella baltica (strain OS185).